The chain runs to 450 residues: Eukaryotic translation initiation factor 3 subunit E (450 aa).

Residues 255 to 424 (TELFFSPAYI…GTVIMNHPPQ (170 aa)) form the PCI domain.

This sequence belongs to the eIF-3 subunit E family. In terms of assembly, component of the eukaryotic translation initiation factor 3 (eIF-3) complex.

It localises to the cytoplasm. Component of the eukaryotic translation initiation factor 3 (eIF-3) complex, which is involved in protein synthesis of a specialized repertoire of mRNAs and, together with other initiation factors, stimulates binding of mRNA and methionyl-tRNAi to the 40S ribosome. The eIF-3 complex specifically targets and initiates translation of a subset of mRNAs involved in cell proliferation. This Aspergillus clavatus (strain ATCC 1007 / CBS 513.65 / DSM 816 / NCTC 3887 / NRRL 1 / QM 1276 / 107) protein is Eukaryotic translation initiation factor 3 subunit E (int6).